A 304-amino-acid polypeptide reads, in one-letter code: Ribokinase (304 aa).

Substrate-binding positions include 12–14 (NVD), 41–45 (GKGAN), and E142. ATP is bound by residues N186 and 222–227 (TLGKQG). Residues D248 and T250 each contribute to the K(+) site. Residues 253 to 254 (GD) and N279 contribute to the ATP site. D254 is a substrate binding site. The Proton acceptor role is filled by D254. T285, K288, G290, and S294 together coordinate K(+).

The protein belongs to the carbohydrate kinase PfkB family. Ribokinase subfamily. Homodimer. The cofactor is Mg(2+).

Its subcellular location is the cytoplasm. The catalysed reaction is D-ribose + ATP = D-ribose 5-phosphate + ADP + H(+). The protein operates within carbohydrate metabolism; D-ribose degradation; D-ribose 5-phosphate from beta-D-ribopyranose: step 2/2. Activated by a monovalent cation that binds near, but not in, the active site. The most likely occupant of the site in vivo is potassium. Ion binding induces a conformational change that may alter substrate affinity. Its function is as follows. Catalyzes the phosphorylation of ribose at O-5 in a reaction requiring ATP and magnesium. The resulting D-ribose-5-phosphate can then be used either for sythesis of nucleotides, histidine, and tryptophan, or as a component of the pentose phosphate pathway. The polypeptide is Ribokinase (Staphylococcus aureus (strain COL)).